The following is a 214-amino-acid chain: Probable GTP-binding protein EngB (214 aa).

The EngB-type G domain maps to 25 to 203 (EGAEVAFAGR…EQVITGWLNL (179 aa)). Residues 33–40 (GRSNAGKS), 60–64 (GRTQL), 80–83 (DLPG), 147–150 (TKSD), and 182–184 (FSS) contribute to the GTP site. Positions 40 and 62 each coordinate Mg(2+).

This sequence belongs to the TRAFAC class TrmE-Era-EngA-EngB-Septin-like GTPase superfamily. EngB GTPase family. It depends on Mg(2+) as a cofactor.

Necessary for normal cell division and for the maintenance of normal septation. The chain is Probable GTP-binding protein EngB from Teredinibacter turnerae (strain ATCC 39867 / T7901).